The chain runs to 312 residues: DNA-directed RNA polymerase subunit alpha (312 aa).

Positions 1–226 (MIEFEKPNIT…EHFKVFMSTD (226 aa)) are alpha N-terminal domain (alpha-NTD). The alpha C-terminal domain (alpha-CTD) stretch occupies residues 243–312 (NEKKLEMTIE…DLGLSLRQDD (70 aa)).

Belongs to the RNA polymerase alpha chain family. As to quaternary structure, homodimer. The RNAP catalytic core consists of 2 alpha, 1 beta, 1 beta' and 1 omega subunit. When a sigma factor is associated with the core the holoenzyme is formed, which can initiate transcription.

It catalyses the reaction RNA(n) + a ribonucleoside 5'-triphosphate = RNA(n+1) + diphosphate. Its function is as follows. DNA-dependent RNA polymerase catalyzes the transcription of DNA into RNA using the four ribonucleoside triphosphates as substrates. The chain is DNA-directed RNA polymerase subunit alpha from Lactobacillus johnsonii (strain CNCM I-12250 / La1 / NCC 533).